The chain runs to 308 residues: MPTGDYDSKPSWADQVEEEGIDVEPLSPQIKKQDPASFVLDTPREVINGNIKTITEYKLNDKDKKIKIVRTFKIETLKASKVVAHRKNWKKFGNSEYDPPGPNVATTTVSDDVLMTFITNKEDLNNQEEEDPMNKLKGQKIVSCRICKGDHWTTRCPYKDTLGPMQKELAEQLGLSTADKEKAPGAEPEPAQAPVSKTGKYVPPSLRDGGSRRGESMQPNRRADDNATIRVTNLSEDTRETDLQELFRPFGSISRIYLAKDKTTGQSKGFAFISFHRREDAARAIAGVSGFGYDHLILNVEWAKPSTN.

Disordered stretches follow at residues 1–35 (MPTG…KQDP) and 176–227 (STAD…DDNA). The segment covering 185-194 (GAEPEPAQAP) has biased composition (low complexity). Basic and acidic residues predominate over residues 209–227 (GGSRRGESMQPNRRADDNA). The 79-residue stretch at 227-305 (ATIRVTNLSE…LILNVEWAKP (79 aa)) folds into the RRM domain.

It belongs to the eIF-3 subunit G family. Component of the eukaryotic translation initiation factor 3 (eIF-3) complex, which is composed of 13 subunits: eif3a, eif3b, eif3c, eif3d, eif3e, eif3f, eif3g, eif3h, eif3i, eif3j, eif3k, eif3l and eif3m.

Its subcellular location is the cytoplasm. Functionally, RNA-binding component of the eukaryotic translation initiation factor 3 (eIF-3) complex, which is involved in protein synthesis of a specialized repertoire of mRNAs and, together with other initiation factors, stimulates binding of mRNA and methionyl-tRNAi to the 40S ribosome. The eIF-3 complex specifically targets and initiates translation of a subset of mRNAs involved in cell proliferation. This subunit can bind 18S rRNA. This Xenopus laevis (African clawed frog) protein is Eukaryotic translation initiation factor 3 subunit G-B (eif3g-b).